We begin with the raw amino-acid sequence, 684 residues long: Chaperone protein HtpG (684 aa).

Residues 1–329 (MSKKGTIGVT…SPDIPLNVSR (329 aa)) form an a; substrate-binding region. Residues 330–548 (SYLQSDANVK…FMRRMRDMAQ (219 aa)) form a b region. A c region spans residues 549–684 (LQPGMSFYGE…EFIRRSQRLL (136 aa)).

This sequence belongs to the heat shock protein 90 family. Homodimer.

The protein localises to the cytoplasm. Molecular chaperone. Has ATPase activity. The polypeptide is Chaperone protein HtpG (Porphyromonas gingivalis (strain ATCC BAA-308 / W83)).